A 71-amino-acid chain; its full sequence is Protein translocase subunit SecE (71 aa).

A helical transmembrane segment spans residues 43-63 (VAGAGILAVGAVGFIIYVLLT).

The protein belongs to the SecE/SEC61-gamma family. In terms of assembly, component of the Sec protein translocase complex. Heterotrimer consisting of SecY (alpha), SecG (beta) and SecE (gamma) subunits. The heterotrimers can form oligomers, although 1 heterotrimer is thought to be able to translocate proteins. Interacts with the ribosome. May interact with SecDF, and other proteins may be involved.

The protein resides in the cell membrane. Essential subunit of the Sec protein translocation channel SecYEG. Clamps together the 2 halves of SecY. May contact the channel plug during translocation. This is Protein translocase subunit SecE from Methanosarcina mazei (strain ATCC BAA-159 / DSM 3647 / Goe1 / Go1 / JCM 11833 / OCM 88) (Methanosarcina frisia).